Reading from the N-terminus, the 100-residue chain is Osteocalcin (100 aa).

The N-terminal stretch at 1–23 is a signal peptide; sequence MRTPMLLALLALATLCLAGRADA. Residues 24 to 51 constitute a propeptide that is removed on maturation; that stretch reads KPGDAESGKGAAFVSKQEGSEVVKRLRR. In terms of domain architecture, Gla spans 52 to 98; that stretch reads YLDHWLGAPAPYPDPLEPKREVCELNPDCDELADHIGFQEAYRRFYG. A 4-hydroxyproline modification is found at P60. The Ca(2+) site is built by E68, E72, E75, and D81. 3 positions are modified to 4-carboxyglutamate: E68, E72, and E75. Cysteines 74 and 80 form a disulfide.

It belongs to the osteocalcin/matrix Gla protein family. In terms of processing, gamma-carboxyglutamate residues are formed by vitamin K dependent carboxylation by GGCX. These residues are essential for the binding of calcium. Decarboxylation promotes the hormone activity.

The protein localises to the secreted. The carboxylated form is one of the main organic components of the bone matrix, which constitutes 1-2% of the total bone protein. It acts as a negative regulator of bone formation and is required to limit bone formation without impairing bone resorption or mineralization. The carboxylated form binds strongly to apatite and calcium. Functionally, the uncarboxylated form acts as a hormone secreted by osteoblasts, which regulates different cellular processes, such as energy metabolism, male fertility and brain development. Regulates of energy metabolism by acting as a hormone favoring pancreatic beta-cell proliferation, insulin secretion and sensitivity and energy expenditure. Uncarboxylated osteocalcin hormone also promotes testosterone production in the testes: acts as a ligand for G protein-coupled receptor GPRC6A at the surface of Leydig cells, initiating a signaling response that promotes the expression of enzymes required for testosterone synthesis in a CREB-dependent manner. Also acts as a regulator of brain development: osteocalcin hormone crosses the blood-brain barrier and acts as a ligand for GPR158 on neurons, initiating a signaling response that prevents neuronal apoptosis in the hippocampus, favors the synthesis of all monoamine neurotransmitters and inhibits that of gamma-aminobutyric acid (GABA). Osteocalcin also crosses the placenta during pregnancy and maternal osteocalcin is required for fetal brain development. In Bos taurus (Bovine), this protein is Osteocalcin (BGLAP).